The primary structure comprises 372 residues: Alpha-parvin (372 aa).

The disordered stretch occupies residues 1–31 (MATSPQKSPLVPKSPTPKSPPSRKKDDSFLG). Alanine 2 carries the post-translational modification N-acetylalanine. A phosphoserine mark is found at serine 8, serine 14, and serine 19. An interaction with ARHGAP31 region spans residues 21–25 (PSRKK). Serine 28 and serine 62 each carry phosphoserine. Calponin-homology (CH) domains follow at residues 95 to 202 (QELM…QYFR) and 262 to 369 (NVVK…TKYR). A required for interaction with TESK1 and ILK region spans residues 223-372 (GILQSRQIQE…NLFTKYRNVE (150 aa)).

It belongs to the parvin family. As to quaternary structure, component of the heterotrimeric IPP (ILK-PINCH-PARVIN) complex composed of ILK, LIMS1/PINCH and PARVA; the complex binds to F-actin via the C-terminal tail of LIMS1 and the N-terminal region of PARVA, promoting F-actin filament bundling. Interacts with TGFB1I1. Interacts with ARHGAP31. Interacts with the actin cytoskeleton. Interacts (via C-terminus) with TESK1 (via C-terminus); the interaction inhibits TESK1 kinase activity. Interacts with PXN/PAXILLIN (via LD motif 4).

It is found in the cell junction. The protein localises to the focal adhesion. It localises to the cell membrane. Its subcellular location is the cytoplasm. The protein resides in the cytoskeleton. It is found in the myofibril. The protein localises to the sarcomere. It localises to the z line. Its function is as follows. Plays a role in sarcomere organization and in smooth muscle cell contraction. Required for normal development of the embryonic cardiovascular system, and for normal septation of the heart outflow tract. Plays a role in sprouting angiogenesis and is required for normal adhesion of vascular smooth muscle cells to endothelial cells during blood vessel development. Plays a role in the reorganization of the actin cytoskeleton, formation of lamellipodia and ciliogenesis. Plays a role in the establishment of cell polarity, cell adhesion, cell spreading, and directed cell migration. Within the IPP (ILK-PINCH-PARVIN) complex, binds to F-actin, promoting F-actin bundling, a process required to generate force for actin cytoskeleton reorganization and subsequent dynamic cell adhesion events such as cell spreading and migration. The protein is Alpha-parvin (Parva) of Mus musculus (Mouse).